A 486-amino-acid polypeptide reads, in one-letter code: Siroheme synthase (486 aa).

A precorrin-2 dehydrogenase /sirohydrochlorin ferrochelatase region spans residues 1–204 (MNYLPIFVDL…HQIEQAEALV (204 aa)). NAD(+) is bound by residues 22-23 (HV) and 43-44 (EK). Ser128 is modified (phosphoserine). A uroporphyrinogen-III C-methyltransferase region spans residues 216–486 (GEVSLVGAGP…NKETHWKQAA (271 aa)). Position 225 (Pro225) interacts with S-adenosyl-L-methionine. Asp248 acts as the Proton acceptor in catalysis. The active-site Proton donor is the Lys270. Residues 301-303 (GGD), Val306, 331-332 (TA), Met383, and Gly412 each bind S-adenosyl-L-methionine.

This sequence in the N-terminal section; belongs to the precorrin-2 dehydrogenase / sirohydrochlorin ferrochelatase family. It in the C-terminal section; belongs to the precorrin methyltransferase family.

It catalyses the reaction uroporphyrinogen III + 2 S-adenosyl-L-methionine = precorrin-2 + 2 S-adenosyl-L-homocysteine + H(+). The catalysed reaction is precorrin-2 + NAD(+) = sirohydrochlorin + NADH + 2 H(+). The enzyme catalyses siroheme + 2 H(+) = sirohydrochlorin + Fe(2+). Its pathway is cofactor biosynthesis; adenosylcobalamin biosynthesis; precorrin-2 from uroporphyrinogen III: step 1/1. The protein operates within cofactor biosynthesis; adenosylcobalamin biosynthesis; sirohydrochlorin from precorrin-2: step 1/1. It functions in the pathway porphyrin-containing compound metabolism; siroheme biosynthesis; precorrin-2 from uroporphyrinogen III: step 1/1. It participates in porphyrin-containing compound metabolism; siroheme biosynthesis; siroheme from sirohydrochlorin: step 1/1. Its pathway is porphyrin-containing compound metabolism; siroheme biosynthesis; sirohydrochlorin from precorrin-2: step 1/1. In terms of biological role, multifunctional enzyme that catalyzes the SAM-dependent methylations of uroporphyrinogen III at position C-2 and C-7 to form precorrin-2 via precorrin-1. Then it catalyzes the NAD-dependent ring dehydrogenation of precorrin-2 to yield sirohydrochlorin. Finally, it catalyzes the ferrochelation of sirohydrochlorin to yield siroheme. This is Siroheme synthase from Actinobacillus pleuropneumoniae serotype 7 (strain AP76).